Here is a 261-residue protein sequence, read N- to C-terminus: Ribosomal RNA small subunit methyltransferase J (261 aa).

S-adenosyl-L-methionine contacts are provided by residues 109–110 (RD), 125–126 (ER), and D179.

The protein belongs to the methyltransferase superfamily. RsmJ family.

The protein localises to the cytoplasm. The catalysed reaction is guanosine(1516) in 16S rRNA + S-adenosyl-L-methionine = N(2)-methylguanosine(1516) in 16S rRNA + S-adenosyl-L-homocysteine + H(+). Functionally, specifically methylates the guanosine in position 1516 of 16S rRNA. This chain is Ribosomal RNA small subunit methyltransferase J, found in Pseudomonas aeruginosa (strain ATCC 15692 / DSM 22644 / CIP 104116 / JCM 14847 / LMG 12228 / 1C / PRS 101 / PAO1).